The chain runs to 661 residues: DNA ligase (661 aa).

NAD(+)-binding positions include 31–35 (DSGYD), 80–81 (SL), and glutamate 109. Lysine 111 (N6-AMP-lysine intermediate) is an active-site residue. 4 residues coordinate NAD(+): arginine 132, glutamate 167, lysine 283, and lysine 307. Zn(2+)-binding residues include cysteine 401, cysteine 404, cysteine 419, and cysteine 424. The 80-residue stretch at 582-661 (AGEQLLQGKT…AGFLNLLGLS (80 aa)) folds into the BRCT domain.

The protein belongs to the NAD-dependent DNA ligase family. LigA subfamily. Mg(2+) serves as cofactor. The cofactor is Mn(2+).

The catalysed reaction is NAD(+) + (deoxyribonucleotide)n-3'-hydroxyl + 5'-phospho-(deoxyribonucleotide)m = (deoxyribonucleotide)n+m + AMP + beta-nicotinamide D-nucleotide.. DNA ligase that catalyzes the formation of phosphodiester linkages between 5'-phosphoryl and 3'-hydroxyl groups in double-stranded DNA using NAD as a coenzyme and as the energy source for the reaction. It is essential for DNA replication and repair of damaged DNA. The sequence is that of DNA ligase from Syntrophomonas wolfei subsp. wolfei (strain DSM 2245B / Goettingen).